A 212-amino-acid polypeptide reads, in one-letter code: Peptide methionine sulfoxide reductase MsrA (212 aa).

The active site involves cysteine 52.

It belongs to the MsrA Met sulfoxide reductase family.

The enzyme catalyses L-methionyl-[protein] + [thioredoxin]-disulfide + H2O = L-methionyl-(S)-S-oxide-[protein] + [thioredoxin]-dithiol. The catalysed reaction is [thioredoxin]-disulfide + L-methionine + H2O = L-methionine (S)-S-oxide + [thioredoxin]-dithiol. Its function is as follows. Has an important function as a repair enzyme for proteins that have been inactivated by oxidation. Catalyzes the reversible oxidation-reduction of methionine sulfoxide in proteins to methionine. This is Peptide methionine sulfoxide reductase MsrA from Salmonella arizonae (strain ATCC BAA-731 / CDC346-86 / RSK2980).